A 932-amino-acid polypeptide reads, in one-letter code: Protein translocase subunit SecA (932 aa).

ATP is bound by residues Q87, 105-109, and D515; that span reads GEGKT. Zn(2+) contacts are provided by C916, C918, C927, and H928.

This sequence belongs to the SecA family. Monomer and homodimer. Part of the essential Sec protein translocation apparatus which comprises SecA, SecYEG and auxiliary proteins SecDF-YajC and YidC. Zn(2+) is required as a cofactor.

It localises to the cell inner membrane. The protein resides in the cytoplasm. It carries out the reaction ATP + H2O + cellular proteinSide 1 = ADP + phosphate + cellular proteinSide 2.. Its function is as follows. Part of the Sec protein translocase complex. Interacts with the SecYEG preprotein conducting channel. Has a central role in coupling the hydrolysis of ATP to the transfer of proteins into and across the cell membrane, serving both as a receptor for the preprotein-SecB complex and as an ATP-driven molecular motor driving the stepwise translocation of polypeptide chains across the membrane. The protein is Protein translocase subunit SecA of Burkholderia lata (strain ATCC 17760 / DSM 23089 / LMG 22485 / NCIMB 9086 / R18194 / 383).